A 292-amino-acid chain; its full sequence is 5,10-methylenetetrahydrofolate reductase (292 aa).

E26 functions as the Proton donor/acceptor in the catalytic mechanism. T57 is an NADH binding site. FAD contacts are provided by Y58, A60, H86, R116, G117, D118, A130, Y150, H154, A157, D163, N166, R169, and K170. D118 is a binding site for (6S)-5-methyl-5,6,7,8-tetrahydrofolate. Position 181 (Q181) interacts with NADH. The (6S)-5-methyl-5,6,7,8-tetrahydrofolate site is built by Q181, Q217, and R277.

The protein belongs to the methylenetetrahydrofolate reductase family. FAD serves as cofactor.

It carries out the reaction (6S)-5-methyl-5,6,7,8-tetrahydrofolate + NAD(+) = (6R)-5,10-methylene-5,6,7,8-tetrahydrofolate + NADH + H(+). Its pathway is one-carbon metabolism; tetrahydrofolate interconversion. It functions in the pathway amino-acid biosynthesis; L-methionine biosynthesis via de novo pathway. Functionally, catalyzes the NADH-dependent reduction of 5,10-methylenetetrahydrofolate to 5-methyltetrahydrofolate. Is required to provide the methyl group necessary for methionine synthetase to convert homocysteine to methionine; the methyl group is given by 5-methyltetrahydrofolate. The sequence is that of 5,10-methylenetetrahydrofolate reductase (metF) from Haemophilus influenzae (strain ATCC 51907 / DSM 11121 / KW20 / Rd).